The primary structure comprises 360 residues: Peptide chain release factor 1 (360 aa).

Glutamine 233 carries the N5-methylglutamine modification. Residues 286–305 (NEIAQERKSQVGTGDRSERI) form a disordered region.

Belongs to the prokaryotic/mitochondrial release factor family. In terms of processing, methylated by PrmC. Methylation increases the termination efficiency of RF1.

The protein localises to the cytoplasm. Its function is as follows. Peptide chain release factor 1 directs the termination of translation in response to the peptide chain termination codons UAG and UAA. The polypeptide is Peptide chain release factor 1 (Acetivibrio thermocellus (strain ATCC 27405 / DSM 1237 / JCM 9322 / NBRC 103400 / NCIMB 10682 / NRRL B-4536 / VPI 7372) (Clostridium thermocellum)).